The following is a 317-amino-acid chain: Beta-ketoacyl-[acyl-carrier-protein] synthase III (317 aa).

Residues cysteine 112 and histidine 244 contribute to the active site. The tract at residues 245–249 (QANLR) is ACP-binding. Asparagine 274 is a catalytic residue.

It belongs to the thiolase-like superfamily. FabH family. As to quaternary structure, homodimer.

It localises to the cytoplasm. The catalysed reaction is malonyl-[ACP] + acetyl-CoA + H(+) = 3-oxobutanoyl-[ACP] + CO2 + CoA. Its pathway is lipid metabolism; fatty acid biosynthesis. Its function is as follows. Catalyzes the condensation reaction of fatty acid synthesis by the addition to an acyl acceptor of two carbons from malonyl-ACP. Catalyzes the first condensation reaction which initiates fatty acid synthesis and may therefore play a role in governing the total rate of fatty acid production. Possesses both acetoacetyl-ACP synthase and acetyl transacylase activities. Its substrate specificity determines the biosynthesis of branched-chain and/or straight-chain of fatty acids. This Salmonella arizonae (strain ATCC BAA-731 / CDC346-86 / RSK2980) protein is Beta-ketoacyl-[acyl-carrier-protein] synthase III.